Consider the following 267-residue polypeptide: Transcription factor LBX1 (267 aa).

Basic and acidic residues predominate over residues 1-21; sequence MTSKDEAKSSASSVEERRRNA. A disordered region spans residues 1-36; the sequence is MTSKDEAKSSASSVEERRRNALDLLPPPANSNKPLT. The homeobox DNA-binding region spans 127 to 186; that stretch reads RRKSRTAFTNHQIYELEKRFLYQKYLSPADRDQIAQQLGLTNAQVITWFQNRRAKLKRDL. The disordered stretch occupies residues 211–267; the sequence is SELEESGSERGNSRSRSPQLGLTSNHMPLSPSXPLTDQHASKECSEDEEDVEIDVDD. The span at 228–237 shows a compositional bias: polar residues; it reads PQLGLTSNHM. The span at 255 to 267 shows a compositional bias: acidic residues; sequence SEDEEDVEIDVDD.

In terms of tissue distribution, expressed in all myoblasts that will populate body wall muscles as well as in a group of cells the migrate into the head.

It is found in the nucleus. Transcription factor that controls hypaxial muscle development by down-regulating myod1 and cdkn1b/p27, thereby allowing myoblasts to proliferate before the onset of terminal differentiation. This chain is Transcription factor LBX1, found in Xenopus laevis (African clawed frog).